Here is a 225-residue protein sequence, read N- to C-terminus: Small ribosomal subunit protein uS3 (225 aa).

The region spanning 38–106 (LRAFLRRKLS…DVALNIVEIR (69 aa)) is the KH type-2 domain.

This sequence belongs to the universal ribosomal protein uS3 family. As to quaternary structure, part of the 30S ribosomal subunit. Forms a tight complex with proteins S10 and S14.

Functionally, binds the lower part of the 30S subunit head. Binds mRNA in the 70S ribosome, positioning it for translation. The chain is Small ribosomal subunit protein uS3 from Gluconobacter oxydans (strain 621H) (Gluconobacter suboxydans).